The following is a 395-amino-acid chain: Secreted aspartyl protease 1 (395 aa).

A signal peptide spans M1–A20. The propeptide at S21–R88 is removed in mature form. N-linked (GlcNAc...) asparagine glycosylation is present at N41. The 287-residue stretch at W105 to A391 folds into the Peptidase A1 domain. Catalysis depends on residues D121 and D283. Cysteines 321 and 352 form a disulfide.

Belongs to the peptidase A1 family.

Its subcellular location is the secreted. Its activity is regulated as follows. Inhibited by pepstatin A. Dominant secreted aspartyl protease that has a clear preference for aromatic residues in the P1' position directly adjacent to the cleavage site and, in particular, Trp. In addition, it generally cleaves peptides containing Lys, Arg, Phe, Tyr, or Nle (norleucine) in the P1 position, Nle and Glu at P2, and Arg and Val at P2'. Has important roles in facilitating the interaction of the yeast with the external environment. Is able to rapidly hydrolyze Staphylococcus aureus protein A, an important S.aureus virulence factor involved in immune evasion and biofilm formation. Shows anti-biofilm properties and thus plays a role in inter-kingdom interactions, beneficial for host skin health. The protein is Secreted aspartyl protease 1 of Malassezia globosa (strain ATCC MYA-4612 / CBS 7966) (Dandruff-associated fungus).